Consider the following 481-residue polypeptide: Proline--tRNA ligase (481 aa).

This sequence belongs to the class-II aminoacyl-tRNA synthetase family. ProS type 3 subfamily. Homodimer.

It is found in the cytoplasm. It catalyses the reaction tRNA(Pro) + L-proline + ATP = L-prolyl-tRNA(Pro) + AMP + diphosphate. Its function is as follows. Catalyzes the attachment of proline to tRNA(Pro) in a two-step reaction: proline is first activated by ATP to form Pro-AMP and then transferred to the acceptor end of tRNA(Pro). The polypeptide is Proline--tRNA ligase (Chlorobium phaeobacteroides (strain DSM 266 / SMG 266 / 2430)).